A 409-amino-acid polypeptide reads, in one-letter code: Secreted LysM effector Blys2 (409 aa).

Positions 1 to 20 (MTRFTTTLVAALAGANLAAA) are cleaved as a signal peptide. One can recognise a LysM 1 domain in the interval 24 to 71 (YKWRAHAGDTCDSLSSDWSVQVSDFIKWNPSVGANCSNGVTAGQEYCV). Asn58 carries an N-linked (GlcNAc...) asparagine glycan. Residues 74–111 (NGAGSKPTTPPTGSPTTLTTAVTTASSTPTQPTDGAPS) form a disordered region. A compositionally biased stretch (low complexity) spans 87-106 (SPTTLTTAVTTASSTPTQPT). 4 LysM domains span residues 129 to 176 (AWYK…YVCV), 206 to 253 (KWYK…FVCV), 283 to 330 (KFYK…YYCI), and 357 to 405 (KYYK…YICV).

This sequence belongs to the secreted LysM effector family.

The protein localises to the secreted. Its subcellular location is the cell wall. Its function is as follows. Secreted effector that enables the plant pathogenic fungus to manipulate host defenses for successful infection. Required for the full virulence to infect insect hosts. In contrast to Blys5, Blys2 is not able to protect fungal hyphae against the hydrolytic activity of chitinase but plays an important role in evasion of insect immunities. Binds chitin. Coats and protects the cell walls of insect pathogens from host cell recognition. The protein is Secreted LysM effector Blys2 of Beauveria bassiana (strain ARSEF 2860) (White muscardine disease fungus).